The following is a 217-amino-acid chain: Adapter protein MecA (217 aa).

Belongs to the MecA family. Homodimer.

Enables the recognition and targeting of unfolded and aggregated proteins to the ClpC protease or to other proteins involved in proteolysis. Acts negatively in the development of competence by binding ComK and recruiting it to the ClpCP protease. When overexpressed, inhibits sporulation. Also involved in Spx degradation by ClpC. The sequence is that of Adapter protein MecA from Alkalihalophilus pseudofirmus (strain ATCC BAA-2126 / JCM 17055 / OF4) (Bacillus pseudofirmus).